The primary structure comprises 138 residues: Glutaredoxin-like protein C5orf63 (138 aa).

The cysteines at positions 41 and 44 are disulfide-linked. Residues 55–64 (ENRQPYKDQK) show a composition bias toward basic and acidic residues. The interval 55-88 (ENRQPYKDQKLPGTRRRRSPSSPSHPHMASQSGK) is disordered.

This sequence belongs to the glutaredoxin family. YDR286C subfamily.

This is Glutaredoxin-like protein C5orf63 (C5orf63) from Homo sapiens (Human).